A 624-amino-acid polypeptide reads, in one-letter code: Alpha-mannosidase I MNS4 (624 aa).

At 1–7 the chain is on the cytoplasmic side; the sequence is MDSNFKW. Residues 8–28 traverse the membrane as a helical; Signal-anchor for type II membrane protein segment; that stretch reads LLFAILISLTFSGFVLHHGVL. Residues 29–624 lie on the Lumenal side of the membrane; the sequence is AESVKPDEAK…ETDDQRSYSS (596 aa). A glycan (N-linked (GlcNAc...) asparagine) is linked at asparagine 115. Residue glutamate 122 is the Proton donor of the active site. Aspartate 262 is an active-site residue. Glutamate 355 (proton donor) is an active-site residue. Glutamate 376 is a catalytic residue. Threonine 466 contacts Ca(2+). Asparagine 494 carries N-linked (GlcNAc...) asparagine glycosylation. The interval 574-624 is disordered; the sequence is QTVEKRPQEEEGFTSQSEPIMTISGGSSNDQTGQELTLLESETDDQRSYSS. Positions 586–608 are enriched in polar residues; sequence FTSQSEPIMTISGGSSNDQTGQE.

This sequence belongs to the glycosyl hydrolase 47 family. Ca(2+) serves as cofactor.

It is found in the endoplasmic reticulum membrane. It participates in protein modification; protein glycosylation. In terms of biological role, can convert Man(9)GlcNAc(2) and Man(8)GlcNAc(2) into N-glycans with a terminal alpha-1,6-linked Man residue in the C-branch. Functions in the formation of unique N-glycan structures that are specifically recognized by components of the endoplasmic reticulum-associated degradation (ERAD) machinery, which leads to the degradation of misfolded glycoproteins. Most likely generates N-glycan signal on misfolded glycoproteins that is subsequently recognized by OS9. Required for ERAD of the heavily glycosylated and misfolded BRI1 variants BRI1-5 and BRI1-9. Does not seem to play role in N-glycan processing of correctly folded proteins destined for secretion. This is Alpha-mannosidase I MNS4 (MNS4) from Arabidopsis thaliana (Mouse-ear cress).